A 509-amino-acid chain; its full sequence is tRNA-2-methylthio-N(6)-dimethylallyladenosine synthase (509 aa).

The segment at 1–20 (MNEKQKQESGQVNPADKTSE) is disordered. In terms of domain architecture, MTTase N-terminal spans 66–184 (RKFYIRTYGC…LPELLSEAYL (119 aa)). [4Fe-4S] cluster is bound by residues C75, C111, C145, C221, C225, and C228. The region spanning 207 to 437 (RNGKIKGWVN…NDLVKEISAK (231 aa)) is the Radical SAM core domain. The TRAM domain maps to 440 to 503 (KEYEGRTVEV…TWSLDGVMAG (64 aa)).

This sequence belongs to the methylthiotransferase family. MiaB subfamily. As to quaternary structure, monomer. [4Fe-4S] cluster serves as cofactor.

It is found in the cytoplasm. It catalyses the reaction N(6)-dimethylallyladenosine(37) in tRNA + (sulfur carrier)-SH + AH2 + 2 S-adenosyl-L-methionine = 2-methylsulfanyl-N(6)-dimethylallyladenosine(37) in tRNA + (sulfur carrier)-H + 5'-deoxyadenosine + L-methionine + A + S-adenosyl-L-homocysteine + 2 H(+). Catalyzes the methylthiolation of N6-(dimethylallyl)adenosine (i(6)A), leading to the formation of 2-methylthio-N6-(dimethylallyl)adenosine (ms(2)i(6)A) at position 37 in tRNAs that read codons beginning with uridine. In Bacillus velezensis (strain DSM 23117 / BGSC 10A6 / LMG 26770 / FZB42) (Bacillus amyloliquefaciens subsp. plantarum), this protein is tRNA-2-methylthio-N(6)-dimethylallyladenosine synthase.